We begin with the raw amino-acid sequence, 312 residues long: Protease HtpX homolog (312 aa).

2 helical membrane passes run 6 to 26 and 28 to 48; these read TAVL…AIGG and GGMM…YWYA. His-130 contacts Zn(2+). Glu-131 is a catalytic residue. Position 134 (His-134) interacts with Zn(2+). A run of 2 helical transmembrane segments spans residues 145–165 and 173–193; these read ITAS…FFGG and PFGG…AMVV. Residue Glu-202 participates in Zn(2+) binding. Residues 287-297 are compositionally biased toward low complexity; it reads PAPARAAPARG. The disordered stretch occupies residues 287–312; the sequence is PAPARAAPARGPWGGNTGGTRRGPWG. Residues 298-312 are compositionally biased toward gly residues; sequence PWGGNTGGTRRGPWG.

It belongs to the peptidase M48B family. Zn(2+) is required as a cofactor.

It is found in the cell inner membrane. This is Protease HtpX homolog from Azorhizobium caulinodans (strain ATCC 43989 / DSM 5975 / JCM 20966 / LMG 6465 / NBRC 14845 / NCIMB 13405 / ORS 571).